Consider the following 465-residue polypeptide: Apolipoprotein N-acyltransferase (465 aa).

6 consecutive transmembrane segments (helical) span residues 12-32, 49-69, 80-100, 122-142, 161-181, and 189-209; these read AVLG…LSML, ALWG…LHPL, LPVA…LLLL, LLAL…LFWI, WLGS…LWQL, and CAWW…SLSP. The 228-residue stretch at 221 to 448 folds into the CN hydrolase domain; that stretch reads WQPAIPTREK…DAVAAAELQR (228 aa). E262 acts as the Proton acceptor in catalysis. K312 is a catalytic residue. The active-site Nucleophile is the C360.

The protein belongs to the CN hydrolase family. Apolipoprotein N-acyltransferase subfamily.

It localises to the cell inner membrane. It carries out the reaction N-terminal S-1,2-diacyl-sn-glyceryl-L-cysteinyl-[lipoprotein] + a glycerophospholipid = N-acyl-S-1,2-diacyl-sn-glyceryl-L-cysteinyl-[lipoprotein] + a 2-acyl-sn-glycero-3-phospholipid + H(+). It functions in the pathway protein modification; lipoprotein biosynthesis (N-acyl transfer). In terms of biological role, catalyzes the phospholipid dependent N-acylation of the N-terminal cysteine of apolipoprotein, the last step in lipoprotein maturation. The chain is Apolipoprotein N-acyltransferase from Parasynechococcus marenigrum (strain WH8102).